We begin with the raw amino-acid sequence, 200 residues long: Small ribosomal subunit protein eS1 (200 aa).

The protein belongs to the eukaryotic ribosomal protein eS1 family.

This Thermococcus gammatolerans (strain DSM 15229 / JCM 11827 / EJ3) protein is Small ribosomal subunit protein eS1.